Here is a 414-residue protein sequence, read N- to C-terminus: Ferredoxin--NAD(P)(+) reductase fdr (414 aa).

An FAD-binding site is contributed by 7–38 (DVVIVGAGHGGAQTAIALRQNGFAGTIAIIGA). 149–177 (KVVIIGGGYIGLEAAAVMAKFGKNVTLIE) is a binding site for NAD(+).

It belongs to the FAD-dependent oxidoreductase family. Monomer. Carbazole 1,9a-dioxygenase complex consists of a terminal oxygenase component CarAa, a ferredoxin reductase component fdr and a ferredoxin component CarAc. It depends on FAD as a cofactor.

The enzyme catalyses 2 reduced [2Fe-2S]-[ferredoxin] + NAD(+) + H(+) = 2 oxidized [2Fe-2S]-[ferredoxin] + NADH. The catalysed reaction is 2 reduced [2Fe-2S]-[ferredoxin] + NADP(+) + H(+) = 2 oxidized [2Fe-2S]-[ferredoxin] + NADPH. Its function is as follows. Part of the multicomponent carbazole 1,9a-dioxygenase (CARDO), that converts carbazole (CAR) into 2-aminobiphenyl-2,3-diol. The protein is Ferredoxin--NAD(P)(+) reductase fdr (fdr) of Sphingomonas sp.